Here is a 182-residue protein sequence, read N- to C-terminus: Inorganic pyrophosphatase (182 aa).

Residues Lys30, Arg44, and Tyr56 each coordinate substrate. Residues Asp66, Asp71, and Asp103 each contribute to the Mg(2+) site. Tyr142 contacts substrate.

The protein belongs to the PPase family. In terms of assembly, homohexamer. Requires Mg(2+) as cofactor.

It localises to the cytoplasm. It catalyses the reaction diphosphate + H2O = 2 phosphate + H(+). Its function is as follows. Catalyzes the hydrolysis of inorganic pyrophosphate (PPi) forming two phosphate ions. The polypeptide is Inorganic pyrophosphatase (Buchnera aphidicola subsp. Acyrthosiphon pisum (strain APS) (Acyrthosiphon pisum symbiotic bacterium)).